An 896-amino-acid chain; its full sequence is DNA mismatch repair protein MutS (896 aa).

599–606 (GPNMAGKS) serves as a coordination point for ATP.

This sequence belongs to the DNA mismatch repair MutS family.

In terms of biological role, this protein is involved in the repair of mismatches in DNA. It is possible that it carries out the mismatch recognition step. This protein has a weak ATPase activity. This chain is DNA mismatch repair protein MutS, found in Geobacillus kaustophilus (strain HTA426).